A 193-amino-acid polypeptide reads, in one-letter code: tRNA(Phe) 7-((3-amino-3-carboxypropyl)-4-demethylwyosine(37)-N(4))-methyltransferase (193 aa).

It belongs to the TYW3 family.

The enzyme catalyses 4-demethyl-7-[(3S)-3-amino-3-carboxypropyl]wyosine(37) in tRNA(Phe) + S-adenosyl-L-methionine = 7-[(3S)-3-amino-3-carboxypropyl]wyosine(37) in tRNA(Phe) + S-adenosyl-L-homocysteine + H(+). Functionally, S-adenosyl-L-methionine-dependent methyltransferase that acts as a component of the wyosine derivatives biosynthesis pathway. Probably methylates N-4 position of wybutosine-86 to produce wybutosine-72. In Methanocaldococcus jannaschii (strain ATCC 43067 / DSM 2661 / JAL-1 / JCM 10045 / NBRC 100440) (Methanococcus jannaschii), this protein is tRNA(Phe) 7-((3-amino-3-carboxypropyl)-4-demethylwyosine(37)-N(4))-methyltransferase.